Consider the following 254-residue polypeptide: Small ribosomal subunit protein uS2 (254 aa).

Positions 228–254 (DRGAEKEVEAAEEAPAAEAEAAPATEE) are disordered. Over residues 240-254 (EAPAAEAEAAPATEE) the composition is skewed to low complexity.

The protein belongs to the universal ribosomal protein uS2 family.

The chain is Small ribosomal subunit protein uS2 from Flavobacterium johnsoniae (strain ATCC 17061 / DSM 2064 / JCM 8514 / BCRC 14874 / CCUG 350202 / NBRC 14942 / NCIMB 11054 / UW101) (Cytophaga johnsonae).